The sequence spans 317 residues: NADPH-dependent D-xylose reductase (317 aa).

Catalysis depends on Tyr-47, which acts as the Proton donor. Residue His-109 participates in substrate binding. NADP(+) is bound by residues 164–165, 213–222, and 269–279; these read SN, SSFGPQSFVE, and KSNNPDRLLSN.

This sequence belongs to the aldo/keto reductase family.

The enzyme catalyses xylitol + NAD(+) = D-xylose + NADH + H(+). It catalyses the reaction xylitol + NADP(+) = D-xylose + NADPH + H(+). It functions in the pathway carbohydrate metabolism; D-xylose degradation. Reduces D-xylose into xylitol. Preferentially utilizes NADPH as a cosubstrate. The chain is NADPH-dependent D-xylose reductase (XYL1) from Meyerozyma guilliermondii (strain ATCC 6260 / CBS 566 / DSM 6381 / JCM 1539 / NBRC 10279 / NRRL Y-324) (Yeast).